Consider the following 205-residue polypeptide: Holliday junction branch migration complex subunit RuvA (205 aa).

The segment at 1–67 is domain I; that stretch reads MIGWLKGDVQ…ADNLQLFGFL (67 aa). The tract at residues 68–146 is domain II; that stretch reads QLAERDLFRE…DSVASTGPER (79 aa). The segment at 147–155 is flexible linker; sequence NQLDPVAPD. The interval 155-205 is domain III; the sequence is DLIATLETLGFETHEIRDALQRLNGMGGPQDGDDDDAWLRACIKLMSSTDP.

Belongs to the RuvA family. In terms of assembly, homotetramer. Forms an RuvA(8)-RuvB(12)-Holliday junction (HJ) complex. HJ DNA is sandwiched between 2 RuvA tetramers; dsDNA enters through RuvA and exits via RuvB. An RuvB hexamer assembles on each DNA strand where it exits the tetramer. Each RuvB hexamer is contacted by two RuvA subunits (via domain III) on 2 adjacent RuvB subunits; this complex drives branch migration. In the full resolvosome a probable DNA-RuvA(4)-RuvB(12)-RuvC(2) complex forms which resolves the HJ.

Its subcellular location is the cytoplasm. Its function is as follows. The RuvA-RuvB-RuvC complex processes Holliday junction (HJ) DNA during genetic recombination and DNA repair, while the RuvA-RuvB complex plays an important role in the rescue of blocked DNA replication forks via replication fork reversal (RFR). RuvA specifically binds to HJ cruciform DNA, conferring on it an open structure. The RuvB hexamer acts as an ATP-dependent pump, pulling dsDNA into and through the RuvAB complex. HJ branch migration allows RuvC to scan DNA until it finds its consensus sequence, where it cleaves and resolves the cruciform DNA. This Parasynechococcus marenigrum (strain WH8102) protein is Holliday junction branch migration complex subunit RuvA.